Reading from the N-terminus, the 64-residue chain is Cytochrome c oxidase subunit 5C-2 (64 aa).

A helical transmembrane segment spans residues 15–34; that stretch reads SVVKELVIGTVLGLAAGGLW.

This sequence belongs to the cytochrome c oxidase subunit 5C family.

The protein localises to the mitochondrion inner membrane. In terms of biological role, this protein is one of the nuclear-coded polypeptide chains of cytochrome c oxidase, the terminal oxidase in mitochondrial electron transport. The protein is Cytochrome c oxidase subunit 5C-2 (COX5C2) of Helianthus annuus (Common sunflower).